A 314-amino-acid chain; its full sequence is Malate dehydrogenase (314 aa).

Residues 11-16 and D35 contribute to the NAD(+) site; that span reads GSGNIG. Positions 84 and 90 each coordinate substrate. NAD(+) is bound by residues N97 and 120–122; that span reads ITN. Substrate contacts are provided by N122 and R153. Catalysis depends on H177, which acts as the Proton acceptor.

It belongs to the LDH/MDH superfamily. MDH type 3 family.

The enzyme catalyses (S)-malate + NAD(+) = oxaloacetate + NADH + H(+). Functionally, catalyzes the reversible oxidation of malate to oxaloacetate. The sequence is that of Malate dehydrogenase from Rickettsia prowazekii (strain Madrid E).